We begin with the raw amino-acid sequence, 281 residues long: Bifunctional protein FolD (281 aa).

NADP(+) is bound by residues 164-166 (GAS), Ile189, and Ile230.

This sequence belongs to the tetrahydrofolate dehydrogenase/cyclohydrolase family. As to quaternary structure, homodimer.

The catalysed reaction is (6R)-5,10-methylene-5,6,7,8-tetrahydrofolate + NADP(+) = (6R)-5,10-methenyltetrahydrofolate + NADPH. The enzyme catalyses (6R)-5,10-methenyltetrahydrofolate + H2O = (6R)-10-formyltetrahydrofolate + H(+). Its pathway is one-carbon metabolism; tetrahydrofolate interconversion. In terms of biological role, catalyzes the oxidation of 5,10-methylenetetrahydrofolate to 5,10-methenyltetrahydrofolate and then the hydrolysis of 5,10-methenyltetrahydrofolate to 10-formyltetrahydrofolate. The polypeptide is Bifunctional protein FolD (Sulfurovum sp. (strain NBC37-1)).